The primary structure comprises 275 residues: Lectin 8 (275 aa).

Positions 1–31 (MANSNPKLLVTQNPFSVFLLTFLLLITNVKS) are cleaved as a signal peptide. 2 N-linked (GlcNAc...) asparagine glycosylation sites follow: asparagine 55 and asparagine 150.

The protein belongs to the leguminous lectin family.

May be involved in arbuscular mycorrhizal (AM) symbiosis with AM fungi. This chain is Lectin 8, found in Medicago truncatula (Barrel medic).